The sequence spans 219 residues: Probable nicotinate-nucleotide adenylyltransferase (219 aa).

This sequence belongs to the NadD family.

It catalyses the reaction nicotinate beta-D-ribonucleotide + ATP + H(+) = deamido-NAD(+) + diphosphate. It functions in the pathway cofactor biosynthesis; NAD(+) biosynthesis; deamido-NAD(+) from nicotinate D-ribonucleotide: step 1/1. Catalyzes the reversible adenylation of nicotinate mononucleotide (NaMN) to nicotinic acid adenine dinucleotide (NaAD). The chain is Probable nicotinate-nucleotide adenylyltransferase from Cronobacter sakazakii (strain ATCC BAA-894) (Enterobacter sakazakii).